Reading from the N-terminus, the 324-residue chain is Type II restriction enzyme AplI (324 aa).

The protein belongs to the BsuBI/PstI type II restriction endonuclease family. Mg(2+) serves as cofactor.

The catalysed reaction is Endonucleolytic cleavage of DNA to give specific double-stranded fragments with terminal 5'-phosphates.. With respect to regulation, activated by K(+) and Na(+) ions, whereas NH(4)(+) ions appear to inhibit endonuclease activity. Functionally, a P subtype restriction enzyme that recognizes the double-stranded sequence 5'-CTGCAG-3' and cleaves after A-5. The protein is Type II restriction enzyme AplI (aplIR) of Arthrospira platensis (strain NIES-39 / UTEX 3086 / IAM M-135) (Spirulina platensis).